Here is an 888-residue protein sequence, read N- to C-terminus: Calcium-transporting ATPase 1 (888 aa).

4 helical membrane-spanning segments follow: residues 53–75, 79–97, 246–266, and 283–303; these read IFAQ…SAFV, ADAS…IGVV, VGKY…LIGF, and AVAA…AIGV. V284, A285, I287, and E289 together coordinate Ca(2+). D331 serves as the catalytic 4-aspartylphosphate intermediate. The next 6 helical transmembrane spans lie at 675 to 695, 703 to 723, 747 to 767, 791 to 811, 831 to 851, and 865 to 885; these read ILFL…AILL, PIHI…SLGV, VPFL…AFIA, LLHA…VHSF, LVFS…IPPL, and WGFV…IKLA. N710 and D714 together coordinate Ca(2+).

The protein belongs to the cation transport ATPase (P-type) (TC 3.A.3) family. Type IIA subfamily.

The protein localises to the cell membrane. It catalyses the reaction Ca(2+)(in) + ATP + H2O = Ca(2+)(out) + ADP + phosphate + H(+). Inhibited by cyclopiazonic acid (CPA). Its function is as follows. Catalyzes the hydrolysis of ATP coupled with the transport of calcium. This is Calcium-transporting ATPase 1 from Bacillus cereus (strain ATCC 10987 / NRS 248).